We begin with the raw amino-acid sequence, 319 residues long: Peroxidase 13 (319 aa).

The first 22 residues, 1–22, serve as a signal peptide directing secretion; it reads MITIALFLVLLYFHDQLGYSAA. 4 disulfides stabilise this stretch: Cys33–Cys111, Cys66–Cys71, Cys117–Cys315, and Cys196–Cys222. Residue His64 is the Proton acceptor of the active site. Ca(2+) contacts are provided by Asp65, Val68, Gly70, Asp72, and Ser74. Pro158 is a substrate binding site. Position 189 (His189) interacts with heme b. Thr190 contacts Ca(2+). Ca(2+) is bound by residues Asp235, Ser238, and Asp243. Asn280 carries N-linked (GlcNAc...) asparagine glycosylation.

It belongs to the peroxidase family. Classical plant (class III) peroxidase subfamily. Heme b serves as cofactor. The cofactor is Ca(2+).

The protein resides in the secreted. It carries out the reaction 2 a phenolic donor + H2O2 = 2 a phenolic radical donor + 2 H2O. Functionally, removal of H(2)O(2), oxidation of toxic reductants, biosynthesis and degradation of lignin, suberization, auxin catabolism, response to environmental stresses such as wounding, pathogen attack and oxidative stress. These functions might be dependent on each isozyme/isoform in each plant tissue. In Arabidopsis thaliana (Mouse-ear cress), this protein is Peroxidase 13 (PER13).